We begin with the raw amino-acid sequence, 975 residues long: Protein HIRA (975 aa).

7 WD repeats span residues 10–50, 64–103, 123–162, 165–204, 214–256, 259–331, and 335–374; these read RHEG…KDND, DHFGTVNCVRWAHHGRYLASGSDDQVIQIHERKAGTGTSE, GHTADVVDLNWSPDDSTLASGSLDNTVHIWSMANGICTAV, GHSSLVKGVTWDPIGSFIASQSDDKTVIIWRTSDWSLAHR, GSTF…ATFD, GHNA…PLFV, and FFTQSVVDLSWSPDGYSLFACSLDGSVATFHFEAKELGYR. The span at 418–433 shows a compositional bias: low complexity; it reads KKVSSVQQFQSPPKVS. Disordered stretches follow at residues 418–510 and 948–975; these read KKVS…RSQN and NVEQMDVTPTPPPPPPAAATEGNNNGAS. A compositionally biased stretch (polar residues) spans 435 to 445; the sequence is DAPNPSTSVPN. Residues 478–492 show a composition bias toward basic and acidic residues; it reads KQREYRRPDGRKRII. Residues 499–510 show a composition bias toward polar residues; the sequence is PSNQDMSNRSQN. Residues 923 to 954 adopt a coiled-coil conformation; the sequence is ATNRKVQRLLNEFMDLLSEYEAAETNVEQMDV.

The protein belongs to the WD repeat HIR1 family.

The protein localises to the nucleus. Functionally, histone chaperone involved in maintining knox genes silencing throughout leaf development. This Oryza sativa subsp. japonica (Rice) protein is Protein HIRA.